The following is a 1317-amino-acid chain: WASH complex subunit 2 (1317 aa).

A sufficient for interaction with WASHC3, WASHC4 and WASHC5; required for interaction with WASHC1 region spans residues 1 to 219 (MNRTSPDSER…VGSDRGSIVD (219 aa)). Residues Ser-157, Ser-159, Ser-204, Ser-205, and Ser-209 each carry the phosphoserine modification. The segment covering 201–213 (GELSSEEGSVGSD) has biased composition (low complexity). Positions 201-630 (GELSSEEGSV…RKSKGELWDS (430 aa)) are disordered. 2 stretches are compositionally biased toward acidic residues: residues 219 to 232 (DSEE…SDED) and 250 to 274 (DEEE…EDIE). Ser-284 carries the phosphoserine modification. 2 stretches are compositionally biased toward basic and acidic residues: residues 289-325 (LAAR…RTPP) and 366-376 (DLFRETSRDRP). Phosphothreonine is present on Thr-323. The interval 348 to 582 (SRGGLFSGQG…QVSSQQPQSQ (235 aa)) is sufficient for interaction with CCDC93. Residues 349-1317 (RGGLFSGQGL…DDPLNAFGSQ (969 aa)) form an interaction with VPS35 region. Residues 358-368 (LFDDEDESDLF) carry the LFa 1 motif. Over residues 379-399 (APVSEESSSPKPGKKIPAGAV) the composition is skewed to low complexity. A phosphoserine mark is found at Ser-385 and Ser-387. Short sequence motifs (LFa) lie at residues 433-445 (LFDD…DNFF) and 464-473 (IFDDEEGDLF). Residues 500-518 (TLPSSKNPKLVSETKTQKG) are compositionally biased toward polar residues. Short sequence motifs (LFa) lie at residues 519–530 (LFSDEEDSEDLF) and 554–565 (LFGDEDEEDNLF). Phosphoserine is present on residues Ser-521 and Ser-526. Over residues 529-548 (LFSSQNSSKSKSASLLSSQL) the composition is skewed to low complexity. Over residues 569-582 (PAKKQVSSQQPQSQ) the composition is skewed to low complexity. Positions 583–592 (EKPKPSEQPK) are enriched in basic and acidic residues. The LFa 6 motif lies at 599 to 611 (LFSSDEEDQWNIT). A phosphoserine mark is found at Ser-601 and Ser-602. The segment covering 613-627 (SHTKLATDRKSKGEL) has biased composition (basic and acidic residues). 2 consecutive short sequence motifs (LFa) follow at residues 646-657 (LFEEDDDEADLF) and 673-685 (LFED…SSLF). Residues 667–817 (TQRTSLLFED…GRPKSTGVFQ (151 aa)) are disordered. A Phosphoserine modification is found at Ser-710. Residues 717 to 744 (VPSRVKSVDVKVGNGKEADVAKVTEKEG) are compositionally biased toward basic and acidic residues. Residues Ser-763 and Ser-778 each carry the phosphoserine modification. The span at 788 to 810 (EDQSNTHVSKNDAEKGLKTDGRP) shows a compositional bias: basic and acidic residues. Short sequence motifs (LFa) lie at residues 815-823 (VFQDEELLF) and 832-838 (DPDVDLF). A Phosphoserine modification is found at Ser-853. Residues 854 to 864 (LFGDDEDYDLF) carry the LFa 11 motif. Disordered regions lie at residues 867–926 (AKTQ…REPS) and 960–1079 (ELAF…AAPP). Basic and acidic residues predominate over residues 874-906 (PEKKGALKKDRPVSLKNEEAPESTEGSKEKSLW). The interaction with phospholipids stretch occupies residues 912-1317 (QDSSGLTPFK…DDPLNAFGSQ (406 aa)). Positions 1003–1021 (NKSRVKVRGKRRPQTRAAR) are enriched in basic residues. The required for interaction with F-actin-capping protein subunit alpha (CAPZA1 or CAPZA2 or CAPZA3) stretch occupies residues 1004-1022 (KSRVKVRGKRRPQTRAARR). 4 positions are modified to phosphoserine: Ser-1029, Ser-1047, Ser-1064, and Ser-1092. The short motif at 1107 to 1114 (LFDSGDIF) is the LFa 12 element. Positions 1119–1141 (GSQSMEGTKVKAAETPAHLSGGS) are disordered. 6 consecutive short sequence motifs (LFa) follow at residues 1147-1161 (VFPA…DDLF), 1177-1185 (LLEDEDDLF), 1210-1216 (IFEDDIF), 1238-1246 (LFDDNIDIF), 1266-1275 (VFDDDTDDIF), and 1306-1314 (IFDDPLNAF). Residues Ser-1152, Ser-1155, and Ser-1156 each carry the phosphoserine modification. Positions 1158–1183 (DDLFQTVKPRPAKKRNPFPLLEDEDD) are disordered. A disordered region spans residues 1277 to 1317 (SGLQAKKSKPKSQSAEATSELRSDHKVSNIFDDPLNAFGSQ). Ser-1316 bears the Phosphoserine mark.

It belongs to the FAM21 family. In terms of assembly, component of the WASH core complex also described as WASH regulatory complex SHRC composed of WASHC1, WASHC2, WASHC3, WASHC4 and WASHC5; in the complex interacts (via N-terminus) directly with WASHC1. The WASH core complex associates via WASHC2 with the F-actin-capping protein dimer (formed by CAPZA1, CAPZA2 or CAPZA3 and CAPZB) in a transient or substoichiometric manner which was initially described as WASH complex. Interacts with VPS35; mediates the association with the retromer CSC complex. Interacts with FKBP15. Interacts with CCDC93, CCDC22, C16orf62 homolog; indicative for an association of the WASH core complex with the CCC complex. Directly interacts with TBC1D23.

Its subcellular location is the early endosome membrane. It is found in the cell membrane. Functionally, acts as a component of the WASH core complex that functions as a nucleation-promoting factor (NPF) at the surface of endosomes, where it recruits and activates the Arp2/3 complex to induce actin polymerization, playing a key role in the fission of tubules that serve as transport intermediates during endosome sorting. Mediates the recruitment of the WASH core complex to endosome membranes via binding to phospholipids and VPS35 of the retromer CSC. Mediates the recruitment of the F-actin-capping protein dimer to the WASH core complex probably promoting localized F-actin polymerization needed for vesicle scission. Via its C-terminus binds various phospholipids, most strongly phosphatidylinositol 4-phosphate (PtdIns-(4)P), phosphatidylinositol 5-phosphate (PtdIns-(5)P) and phosphatidylinositol 3,5-bisphosphate (PtdIns-(3,5)P2). Involved in the endosome-to-plasma membrane trafficking and recycling of SNX27-retromer-dependent cargo proteins, such as GLUT1. Required for the association of DNAJC13, ENTR1, ANKRD50 with retromer CSC subunit VPS35. Required for the endosomal recruitment of CCC complex subunits COMMD1, CCDC93 and C16orf62 homolog. The chain is WASH complex subunit 2 from Cricetulus griseus (Chinese hamster).